The chain runs to 137 residues: Methylglyoxal synthase (137 aa).

Positions 1 to 137 (MKIALIAHDK…DLLRGEEPNV (137 aa)) constitute an MGS-like domain. Residues His-8, Lys-12, 34–37 (TGTT), and 54–55 (SG) contribute to the substrate site. The active-site Proton donor/acceptor is the Asp-60. His-87 is a binding site for substrate.

This sequence belongs to the methylglyoxal synthase family.

It carries out the reaction dihydroxyacetone phosphate = methylglyoxal + phosphate. Functionally, catalyzes the formation of methylglyoxal from dihydroxyacetone phosphate. The polypeptide is Methylglyoxal synthase (Bacillus subtilis (strain 168)).